The primary structure comprises 154 residues: Crossover junction endodeoxyribonuclease RuvC (154 aa).

Active-site residues include Asp-7, Glu-67, and Asp-139. The Mg(2+) site is built by Asp-7, Glu-67, and Asp-139.

It belongs to the RuvC family. As to quaternary structure, homodimer which binds Holliday junction (HJ) DNA. The HJ becomes 2-fold symmetrical on binding to RuvC with unstacked arms; it has a different conformation from HJ DNA in complex with RuvA. In the full resolvosome a probable DNA-RuvA(4)-RuvB(12)-RuvC(2) complex forms which resolves the HJ. The cofactor is Mg(2+).

Its subcellular location is the cytoplasm. It catalyses the reaction Endonucleolytic cleavage at a junction such as a reciprocal single-stranded crossover between two homologous DNA duplexes (Holliday junction).. The RuvA-RuvB-RuvC complex processes Holliday junction (HJ) DNA during genetic recombination and DNA repair. Endonuclease that resolves HJ intermediates. Cleaves cruciform DNA by making single-stranded nicks across the HJ at symmetrical positions within the homologous arms, yielding a 5'-phosphate and a 3'-hydroxyl group; requires a central core of homology in the junction. The consensus cleavage sequence is 5'-(A/T)TT(C/G)-3'. Cleavage occurs on the 3'-side of the TT dinucleotide at the point of strand exchange. HJ branch migration catalyzed by RuvA-RuvB allows RuvC to scan DNA until it finds its consensus sequence, where it cleaves and resolves the cruciform DNA. This Synechococcus sp. (strain WH7803) protein is Crossover junction endodeoxyribonuclease RuvC.